Here is a 128-residue protein sequence, read N- to C-terminus: MAFTGKYEFESEKNYDEFMKRLGLPDEVIERGRNFKIITEVQQDGENFTWSQSYSGGNIMSNKFTIGKECEMQTMGGKKFKATVKMEGGKVVADFPNYHQTSEVVGDKLVEISTIGDVTYERVSKRVA.

An N-acetylalanine modification is found at Ala2.

The protein belongs to the calycin superfamily. Fatty-acid binding protein (FABP) family. In terms of tissue distribution, predominantly expressed in ileum; also expressed in ovary.

It localises to the cytoplasm. It is found in the membrane. Functionally, binds to bile acids and is involved in enterohepatic bile acid metabolism. Required for efficient apical to basolateral transport of conjugated bile acids in ileal enterocytes. Stimulates gastric acid and pepsinogen secretion. This Rattus norvegicus (Rat) protein is Gastrotropin (Fabp6).